The sequence spans 542 residues: Zinc finger protein 280A (542 aa).

Residues 66-185 (VTPGSNSRRK…RDSKRVKLRD (120 aa)) are disordered. The span at 107–122 (EGRSTDSPVTMKSSSE) shows a compositional bias: polar residues. A compositionally biased stretch (low complexity) spans 128-143 (SSPQVVSPSSSDSLPP). Over residues 161–185 (SSPDSKRLSTSDINSRDSKRVKLRD) the composition is skewed to basic and acidic residues. 4 consecutive C2H2-type zinc fingers follow at residues 334–357 (TTCQ…DSVH), 364–387 (AVCK…KDHH), 423–445 (LLCL…CWRH), and 451–474 (LQCS…TKDH). Polar residues predominate over residues 499-520 (QPGSSGMASVIVSNTDPQSSPV). Residues 499–542 (QPGSSGMASVIVSNTDPQSSPVKTKKKTAMNTRDSRLPCSKDSS) form a disordered region.

Its subcellular location is the nucleus. Its function is as follows. May function as a transcription factor. This is Zinc finger protein 280A (ZNF280A) from Homo sapiens (Human).